Consider the following 1940-residue polypeptide: Myosin-3 (1940 aa).

In terms of domain architecture, Myosin N-terminal SH3-like spans 33–82; it reads DAKTYCFVVDSKEEYVKGKIKSSQDGKVTVETEDSRTLVVKPEDVYAMNP. The region spanning 86–779 is the Myosin motor domain; sequence DKIEDMAMLT…LLGTLEEMRD (694 aa). Lysine 130 bears the N6,N6,N6-trimethyllysine mark. 179-186 provides a ligand contact to ATP; that stretch reads GESGAGKT. 2 actin-binding regions span residues 656–678 and 758–772; these read LNKL…IPNE and KFGH…GLLG. Residues 782–811 enclose the IQ domain; that stretch reads LAKLITRTQAVCRGFLMRVEFQKMMQRRES. The stretch at 841–1928 forms a coiled coil; it reads LKSAETEKEM…NKLRAKTRDF (1088 aa). The tract at residues 1260 to 1289 is disordered; it reads ARGKNEEMQRSLSELTTQKSRLQTEAGELS. The span at 1269 to 1282 shows a compositional bias: polar residues; sequence RSLSELTTQKSRLQ.

The protein belongs to the TRAFAC class myosin-kinesin ATPase superfamily. Myosin family. Muscle myosin is a hexameric protein that consists of 2 heavy chain subunits (MHC), 2 alkali light chain subunits (MLC) and 2 regulatory light chain subunits (MLC-2).

It is found in the cytoplasm. The protein resides in the myofibril. Its function is as follows. Muscle contraction. This Mus musculus (Mouse) protein is Myosin-3 (Myh3).